We begin with the raw amino-acid sequence, 119 residues long: Ribonuclease P protein component (119 aa).

Belongs to the RnpA family. Consists of a catalytic RNA component (M1 or rnpB) and a protein subunit.

It carries out the reaction Endonucleolytic cleavage of RNA, removing 5'-extranucleotides from tRNA precursor.. RNaseP catalyzes the removal of the 5'-leader sequence from pre-tRNA to produce the mature 5'-terminus. It can also cleave other RNA substrates such as 4.5S RNA. The protein component plays an auxiliary but essential role in vivo by binding to the 5'-leader sequence and broadening the substrate specificity of the ribozyme. The chain is Ribonuclease P protein component from Borreliella burgdorferi (strain ZS7) (Borrelia burgdorferi).